The primary structure comprises 305 residues: N-acetylmuramic acid 6-phosphate etherase (305 aa).

Residues threonine 59 to lysine 222 form the SIS domain. The active-site Proton donor is glutamate 87. The active site involves glutamate 118.

The protein belongs to the GCKR-like family. MurNAc-6-P etherase subfamily. Homodimer.

It carries out the reaction N-acetyl-D-muramate 6-phosphate + H2O = N-acetyl-D-glucosamine 6-phosphate + (R)-lactate. The protein operates within amino-sugar metabolism; N-acetylmuramate degradation. In terms of biological role, specifically catalyzes the cleavage of the D-lactyl ether substituent of MurNAc 6-phosphate, producing GlcNAc 6-phosphate and D-lactate. This chain is N-acetylmuramic acid 6-phosphate etherase, found in Crocosphaera subtropica (strain ATCC 51142 / BH68) (Cyanothece sp. (strain ATCC 51142)).